The sequence spans 368 residues: N-acetylneuraminate epimerase (368 aa).

The N-terminal stretch at 1–19 (MNKTITALAIMMASFAANA) is a signal peptide. Kelch repeat units follow at residues 40-84 (TVYI…AFID), 86-137 (NLYV…FVHN), 139-173 (KAYV…KINA), 174-219 (YYFD…VNKG), 222-265 (TWLI…VAGG), 287-336 (ENYQ…PWNN), and 338-367 (LLII…VTVQ). Glutamate 228 functions as the Proton acceptor in the catalytic mechanism.

Belongs to the NanM family. As to quaternary structure, homodimer.

The protein localises to the periplasm. It catalyses the reaction N-acetyl-alpha-neuraminate = N-acetyl-beta-neuraminate. Functionally, converts alpha-N-acetylneuranimic acid (Neu5Ac) to the beta-anomer, accelerating the equilibrium between the alpha- and beta-anomers. Probably facilitates sialidase-negative bacteria to compete successfully for limited amounts of extracellular Neu5Ac, which is likely taken up in the beta-anomer. In addition, the rapid removal of sialic acid from solution might be advantageous to the bacterium to damp down host responses. This Shigella boydii serotype 4 (strain Sb227) protein is N-acetylneuraminate epimerase.